The sequence spans 300 residues: Epimerase family protein SAV0769 (300 aa).

The protein belongs to the NAD(P)-dependent epimerase/dehydratase family. SDR39U1 subfamily.

The chain is Epimerase family protein SAV0769 from Staphylococcus aureus (strain Mu50 / ATCC 700699).